The following is a 551-amino-acid chain: Glucans biosynthesis protein D (551 aa).

Positions methionine 1 to alanine 32 form a signal peptide, tat-type signal.

Belongs to the OpgD/OpgG family. In terms of processing, predicted to be exported by the Tat system. The position of the signal peptide cleavage has not been experimentally proven.

It localises to the periplasm. It participates in glycan metabolism; osmoregulated periplasmic glucan (OPG) biosynthesis. Functionally, probably involved in the control of the structural glucose backbone of osmoregulated periplasmic glucans (OPGs). This Escherichia coli O1:K1 / APEC protein is Glucans biosynthesis protein D.